The sequence spans 199 residues: Nuclear transcription factor Y subunit C-2 (199 aa).

The protein belongs to the NFYC/HAP5 subunit family. Heterotrimeric transcription factor composed of three components, NF-YA, NF-YB and NF-YC. NF-YB and NF-YC must interact and dimerize for NF-YA association and DNA binding. Interacts with HTT1 in both cytoplasm and nucleus. Ubiquitous.

The protein resides in the nucleus. The protein localises to the cytoplasm. Functionally, stimulates the transcription of various genes by recognizing and binding to a CCAAT motif in promoters. This is Nuclear transcription factor Y subunit C-2 (NFYC2) from Arabidopsis thaliana (Mouse-ear cress).